The primary structure comprises 280 residues: 3-phenylpropionate-dihydrodiol/cinnamic acid-dihydrodiol dehydrogenase (280 aa).

Serine 143 provides a ligand contact to substrate. The active-site Proton acceptor is tyrosine 156.

It belongs to the short-chain dehydrogenases/reductases (SDR) family.

The catalysed reaction is 3-(cis-5,6-dihydroxycyclohexa-1,3-dien-1-yl)propanoate + NAD(+) = 3-(2,3-dihydroxyphenyl)propanoate + NADH + H(+). It catalyses the reaction (2E)-3-(cis-5,6-dihydroxycyclohexa-1,3-dien-1-yl)prop-2-enoate + NAD(+) = (2E)-3-(2,3-dihydroxyphenyl)prop-2-enoate + NADH + H(+). Its pathway is aromatic compound metabolism; 3-phenylpropanoate degradation. Converts 3-phenylpropionate-dihydrodiol (PP-dihydrodiol) and cinnamic acid-dihydrodiol (CI-dihydrodiol) into 3-(2,3-dihydroxylphenyl)propanoic acid (DHPP) and 2,3-dihydroxicinnamic acid (DHCI), respectively. This Photorhabdus laumondii subsp. laumondii (strain DSM 15139 / CIP 105565 / TT01) (Photorhabdus luminescens subsp. laumondii) protein is 3-phenylpropionate-dihydrodiol/cinnamic acid-dihydrodiol dehydrogenase.